The following is a 241-amino-acid chain: Uridylate kinase (241 aa).

An ATP-binding site is contributed by lysine 15 to glycine 18. Glycine 57 serves as a coordination point for UMP. ATP-binding residues include glycine 58 and arginine 62. UMP-binding positions include aspartate 77 and isoleucine 139 to threonine 146. ATP-binding residues include threonine 166, asparagine 167, phenylalanine 172, and aspartate 175.

The protein belongs to the UMP kinase family. Homohexamer.

The protein localises to the cytoplasm. The catalysed reaction is UMP + ATP = UDP + ADP. It participates in pyrimidine metabolism; CTP biosynthesis via de novo pathway; UDP from UMP (UMPK route): step 1/1. With respect to regulation, inhibited by UTP. Functionally, catalyzes the reversible phosphorylation of UMP to UDP. This chain is Uridylate kinase, found in Wigglesworthia glossinidia brevipalpis.